The primary structure comprises 429 residues: Glutamate-1-semialdehyde 2,1-aminomutase (429 aa).

K272 is modified (N6-(pyridoxal phosphate)lysine).

It belongs to the class-III pyridoxal-phosphate-dependent aminotransferase family. HemL subfamily. The cofactor is pyridoxal 5'-phosphate.

The protein localises to the cytoplasm. The catalysed reaction is (S)-4-amino-5-oxopentanoate = 5-aminolevulinate. It functions in the pathway porphyrin-containing compound metabolism; protoporphyrin-IX biosynthesis; 5-aminolevulinate from L-glutamyl-tRNA(Glu): step 2/2. This is Glutamate-1-semialdehyde 2,1-aminomutase from Methanothrix thermoacetophila (strain DSM 6194 / JCM 14653 / NBRC 101360 / PT) (Methanosaeta thermophila).